The chain runs to 346 residues: Uroporphyrinogen decarboxylase (346 aa).

Substrate-binding positions include 21–25 (RQAGR), aspartate 71, tyrosine 146, serine 201, and histidine 316.

Belongs to the uroporphyrinogen decarboxylase family. As to quaternary structure, homodimer.

It localises to the cytoplasm. The catalysed reaction is uroporphyrinogen III + 4 H(+) = coproporphyrinogen III + 4 CO2. It participates in porphyrin-containing compound metabolism; protoporphyrin-IX biosynthesis; coproporphyrinogen-III from 5-aminolevulinate: step 4/4. Catalyzes the decarboxylation of four acetate groups of uroporphyrinogen-III to yield coproporphyrinogen-III. This Rickettsia massiliae (strain Mtu5) protein is Uroporphyrinogen decarboxylase.